Reading from the N-terminus, the 213-residue chain is Phosphoenolpyruvate guanylyltransferase (213 aa).

Phosphoenolpyruvate-binding residues include threonine 146, glycine 161, and serine 164.

It belongs to the CofC family.

The catalysed reaction is phosphoenolpyruvate + GTP + H(+) = enolpyruvoyl-2-diphospho-5'-guanosine + diphosphate. Its pathway is cofactor biosynthesis; coenzyme F420 biosynthesis. Functionally, guanylyltransferase that catalyzes the activation of phosphoenolpyruvate (PEP) as enolpyruvoyl-2-diphospho-5'-guanosine, via the condensation of PEP with GTP. It is involved in the biosynthesis of coenzyme F420, a hydride carrier cofactor. The protein is Phosphoenolpyruvate guanylyltransferase of Mycolicibacterium vanbaalenii (strain DSM 7251 / JCM 13017 / BCRC 16820 / KCTC 9966 / NRRL B-24157 / PYR-1) (Mycobacterium vanbaalenii).